A 193-amino-acid polypeptide reads, in one-letter code: Ion-translocating oxidoreductase complex subunit A (193 aa).

The next 6 membrane-spanning stretches (helical) occupy residues 5–25 (ILLIISTALINNFVLVKFLGL), 39–59 (IGMGMATTFVLTVASLSAYLV), 65–85 (IPLEAEFLRTLVFILVIAVIV), 102–122 (LLGIYLPLITTNCAVLGVALL), 134–154 (VLYGFGAAAGFSLVLVLFSAL), and 171–191 (SIALITAGLMSLAFMGFTGLV).

The protein belongs to the NqrDE/RnfAE family. As to quaternary structure, the complex is composed of six subunits: RnfA, RnfB, RnfC, RnfD, RnfE and RnfG.

The protein resides in the cell inner membrane. Part of a membrane-bound complex that couples electron transfer with translocation of ions across the membrane. The protein is Ion-translocating oxidoreductase complex subunit A of Glaesserella parasuis serovar 5 (strain SH0165) (Haemophilus parasuis).